Here is a 310-residue protein sequence, read N- to C-terminus: MAEMNLTLVTEFLLIAFTEYPEWALPLFLLFLFMYLITVLGNLEMIILILMDHQLHAPMYFLLSHLAFMDVCYSSITVPQMLAVLLEHGAALSYTRCAAQFFLFTFFGSIDCYLLALMAYDRYLAVCQPLLYVTILTQQARLSLVAGAYVAGLISALVRTVSAFTLSFCGTSEIDFIFCDLPPLLKLTCGESYTQEVLIIMFAIFVIPASMVVILVSYLFIIVAIMGIPAGSQAKTFSTCTSHLTAVSLFFGTLIFMYLRGNSDQSSEKNRVVSVLYTEVIPMLNPLIYSLRNKEVKEALRKILNRAKLS.

Residues methionine 1–leucine 25 are Extracellular-facing. Asparagine 5 carries an N-linked (GlcNAc...) asparagine glycan. The helical transmembrane segment at proline 26–isoleucine 46 threads the bilayer. At isoleucine 47–glutamine 54 the chain is on the cytoplasmic side. Residues leucine 55–serine 75 traverse the membrane as a helical segment. Topologically, residues isoleucine 76–alanine 99 are extracellular. A disulfide bond links cysteine 97 and cysteine 189. Residues glutamine 100–tyrosine 120 form a helical membrane-spanning segment. At aspartate 121–glutamine 139 the chain is on the cytoplasmic side. The helical transmembrane segment at alanine 140–threonine 160 threads the bilayer. The Extracellular portion of the chain corresponds to valine 161–valine 197. A helical transmembrane segment spans residues leucine 198–serine 217. The Cytoplasmic portion of the chain corresponds to tyrosine 218–threonine 236. The chain crosses the membrane as a helical span at residues phenylalanine 237–methionine 257. Over tyrosine 258–asparagine 270 the chain is Extracellular. The chain crosses the membrane as a helical span at residues arginine 271–leucine 291. The Cytoplasmic segment spans residues arginine 292–serine 310.

The protein belongs to the G-protein coupled receptor 1 family.

Its subcellular location is the cell membrane. Odorant receptor. This Homo sapiens (Human) protein is Olfactory receptor 9Q1 (OR9Q1).